Consider the following 1063-residue polypeptide: Integrin alpha-8 (1063 aa).

An N-terminal signal peptide occupies residues 1 to 38 (MSPGASRGPRGSQAPLIAPLCCAAAALGMLLWSPACQA). The Extracellular segment spans residues 39-1012 (FNLDVEKLTV…TPNVSFSIPL (974 aa)). FG-GAP repeat units lie at residues 44-105 (EKLT…GSAQ), 122-183 (NGTK…AYAE), 188-240 (RNSN…IANY), 253-306 (KQTE…STDM), 307-372 (TFIQ…LLFR), 373-431 (DPQI…GLNT), and 435-498 (QVLQ…LHPM). Asn-81 carries N-linked (GlcNAc...) asparagine glycosylation. A disulfide bridge links Cys-96 with Cys-106. Residue Asn-122 is glycosylated (N-linked (GlcNAc...) asparagine). Cys-150 and Cys-171 are disulfide-bonded. An N-linked (GlcNAc...) asparagine glycan is attached at Asn-177. A disulfide bridge connects residues Cys-187 and Cys-200. A glycan (N-linked (GlcNAc...) asparagine) is linked at Asn-239. Positions 275, 277, 279, and 283 each coordinate Ca(2+). N-linked (GlcNAc...) asparagine glycans are attached at residues Asn-302 and Asn-311. 10 residues coordinate Ca(2+): Asp-329, Asn-331, Asp-333, Leu-335, Asp-337, Asp-395, Asn-397, Asp-399, Tyr-401, and Asp-403. The Cell attachment site motif lies at 455–457 (RGD). Residues Asp-459, Asp-461, Asn-463, Tyr-465, and Asp-467 each contribute to the Ca(2+) site. The N-linked (GlcNAc...) asparagine glycan is linked to Asn-504. 2 cysteine pairs are disulfide-bonded: Cys-507–Cys-518 and Cys-524–Cys-580. 2 N-linked (GlcNAc...) asparagine glycosylation sites follow: Asn-601 and Asn-605. Disulfide bonds link Cys-641–Cys-647 and Cys-713–Cys-726. Residues Asn-719, Asn-737, Asn-753, Asn-780, Asn-896, and Asn-923 are each glycosylated (N-linked (GlcNAc...) asparagine). 2 disulfide bridges follow: Cys-867–Cys-924 and Cys-929–Cys-934. Residue Asn-1005 is glycosylated (N-linked (GlcNAc...) asparagine). Residues 1013 to 1033 (WVIILAILLGLLVLAILTLAL) traverse the membrane as a helical segment. The Cytoplasmic segment spans residues 1034 to 1063 (WKCGFFDRARPPQEDMTDREQLTNDKTPEA).

It belongs to the integrin alpha chain family. As to quaternary structure, heterodimer of an alpha and a beta subunit. The alpha subunit is composed of a heavy and a light chain linked by a disulfide bond. Alpha-8 associates with beta-1. In terms of tissue distribution, expressed in mesenchymal cells, including alveolar myofibroblasts, kidney mesangial cells and hepatic stellar cells and vascular and visceral smooth muscle (at protein level).

The protein resides in the membrane. The protein localises to the cell membrane. Functionally, integrin alpha-8/beta-1 functions in the genesis of kidney and probably of other organs by regulating the recruitment of mesenchymal cells into epithelial structures. It recognizes the sequence R-G-D in a wide array of ligands including TNC, FN1, SPP1 TGFB1, TGFB3 and VTN. NPNT is probably its functional ligand in kidney genesis. Neuronal receptor for TNC it mediates cell-cell interactions and regulates neurite outgrowth of sensory and motor neurons. The protein is Integrin alpha-8 (ITGA8) of Homo sapiens (Human).